The primary structure comprises 1377 residues: Zinc finger MYM-type protein 2 (1377 aa).

Residues K48, K88, K98, and K104 each participate in a glycyl lysine isopeptide (Lys-Gly) (interchain with G-Cter in SUMO2) cross-link. Composition is skewed to polar residues over residues 85-115 (TSSKNEELQGNDSKITPSSKELASQKGSVSE) and 127-138 (TNQGQEKNSSNF). The tract at residues 85–177 (TSSKNEELQG…GMGNSGITTE (93 aa)) is disordered. Residues 139–152 (IERRPPETKNRTND) are compositionally biased toward basic and acidic residues. K147 is covalently cross-linked (Glycyl lysine isopeptide (Lys-Gly) (interchain with G-Cter in SUMO2)). The segment covering 153–164 (VDFSTSSFSRSK) has biased composition (polar residues). The residue at position 159 (S159) is a Phosphoserine. Residues K253 and K297 each participate in a glycyl lysine isopeptide (Lys-Gly) (interchain with G-Cter in SUMO2) cross-link. The disordered stretch occupies residues 273 to 305 (NGESATHHNPDSWISQSASFPRNQKQPGVDSLS). Over residues 284–298 (SWISQSASFPRNQKQ) the composition is skewed to polar residues. At S305 the chain carries Phosphoserine. Residues K312, K325, K348, and K366 each participate in a glycyl lysine isopeptide (Lys-Gly) (interchain with G-Cter in SUMO2) cross-link. The MYM-type 1 zinc-finger motif lies at 327–363 (VKVTCANCKKPLQKGQTAYQRKGSAHLFCSTTCLSSF). Residues 369 to 409 (PKKLCVMCKKDITTMKGTIVAQVDSSESFQEFCSTSCLSLY) form an MYM-type 2 zinc finger. Residues K417, K441, K491, K503, K513, K529, and K532 each participate in a glycyl lysine isopeptide (Lys-Gly) (interchain with G-Cter in SUMO2) cross-link. 2 MYM-type zinc fingers span residues 421–456 (NKSRCTICGKLTEIRHEVSFKNMTHKLCSDHCFNRY) and 463–502 (IMNCCEQCGEYLPSKGAGNNVLVIDGQQKRFCCQSCVSEY). The MYM-type 5 zinc finger occupies 533–570 (LTTCTGCRTQCRFFDMTQCIGPNGYMEPYCSTACMNSH). Glycyl lysine isopeptide (Lys-Gly) (interchain with G-Cter in SUMO2) cross-links involve residues K576, K603, K649, K658, K688, K700, and K709. The segment at 636–671 (QLKCNYCKNSFCSKPEILEWENKVHQFCSKTCSDDY) adopts an MYM-type 6 zinc-finger fold. 2 consecutive MYM-type zinc fingers follow at residues 723-758 (RCVTCNYCSQLCKKGATKELDGVVRDFCSEDCCKKF) and 764-799 (KAARCDCCKSQGTLKERVQWRGEMKHFCDQHCLLRF). Glycyl lysine isopeptide (Lys-Gly) (interchain with G-Cter in SUMO2) cross-links involve residues K764, K788, K812, and K829. A phosphoserine mark is found at S838 and S958. Disordered regions lie at residues 983–1002 (LLKNSDPETQSSMPDVPYEP) and 1028–1064 (VFGEEYEEQPRPRSKKKGAKRKAVSGYQSHDDSSDNS). Residues 1039-1050 (PRSKKKGAKRKA) show a composition bias toward basic residues. S1064 bears the Phosphoserine mark. The residue at position 1376 (T1376) is a Phosphothreonine.

In terms of assembly, may be a component of a BHC histone deacetylase complex that contains HDAC1, HDAC2, HMG20B/BRAF35, KDM1A, RCOR1/CoREST, PHF21A/BHC80, ZNF198, ZNF217, ZMYM3, GSE1 and GTF2I.

It localises to the nucleus. May function as a transcription factor. This is Zinc finger MYM-type protein 2 (ZMYM2) from Pongo abelii (Sumatran orangutan).